The sequence spans 293 residues: Probable endonuclease 4 (293 aa).

Zn(2+) contacts are provided by His-75, His-115, Glu-153, Asp-187, His-190, His-224, Asp-237, His-239, and Glu-269.

Belongs to the AP endonuclease 2 family. Zn(2+) serves as cofactor.

It carries out the reaction Endonucleolytic cleavage to 5'-phosphooligonucleotide end-products.. Endonuclease IV plays a role in DNA repair. It cleaves phosphodiester bonds at apurinic or apyrimidinic (AP) sites, generating a 3'-hydroxyl group and a 5'-terminal sugar phosphate. The sequence is that of Probable endonuclease 4 from Chlamydia pneumoniae (Chlamydophila pneumoniae).